A 274-amino-acid polypeptide reads, in one-letter code: Ribosomal RNA small subunit methyltransferase A (274 aa).

S-adenosyl-L-methionine-binding residues include His-15, Leu-17, Gly-42, Glu-64, Asp-89, and Asn-108.

It belongs to the class I-like SAM-binding methyltransferase superfamily. rRNA adenine N(6)-methyltransferase family. RsmA subfamily.

The protein localises to the cytoplasm. The enzyme catalyses adenosine(1518)/adenosine(1519) in 16S rRNA + 4 S-adenosyl-L-methionine = N(6)-dimethyladenosine(1518)/N(6)-dimethyladenosine(1519) in 16S rRNA + 4 S-adenosyl-L-homocysteine + 4 H(+). Its function is as follows. Specifically dimethylates two adjacent adenosines (A1518 and A1519) in the loop of a conserved hairpin near the 3'-end of 16S rRNA in the 30S particle. May play a critical role in biogenesis of 30S subunits. In Prochlorococcus marinus (strain MIT 9215), this protein is Ribosomal RNA small subunit methyltransferase A.